The primary structure comprises 520 residues: MSAIAIIDFGSQFTQLIARQIREMDVYCEIFPSNISFETISKFNGFILSGGPQSVHDGCSEASGVAHEIIKFNEATNVPILGICYGQQLICHYFGAKVKKEFKQEFCKTKIKILKESSIVKDVWNVNSEVDVLMNHADSVETAPQGFTVIASGVINQTIAIVANEQRRIYCTQFHPEVKPTANGSKLLSNFLDIANCKRDWTMKSIIEKQKEKIKNVVGEKKVIAAVSGGVDSSVAVALTYKAVGKQLNCIFIDTGLLRKNQTIALLEEIPVNYVDKSNLFLSRLKGITDPEEKRKIIGNTFIEVFEEEAKKIGNADFLMQGTIYSDVVESGHASGNASTIKSHHNVGGLPEKMNLKLVEPLRYLFKDEVRLLGKEIGLSNEIIFQHPFPGPGLAVRVIGEVDEERVRILQEIDEIYINTMKNYDLYDKIWQAFAVLLPIRTVGVMGDGRTYGYVCALRAVTSFDGMTADAFPFENKSQHSLIFWDFLQNVSSIIVNNVSGVNRVVYDLTSKPPATIEWE.

A Glutamine amidotransferase type-1 domain is found at 3 to 200 (AIAIIDFGSQ…FLDIANCKRD (198 aa)). C84 (nucleophile) is an active-site residue. Residues H175 and E177 contribute to the active site. Residues 201-386 (WTMKSIIEKQ…IGLSNEIIFQ (186 aa)) enclose the GMPS ATP-PPase domain. Residue 228–234 (SGGVDSS) coordinates ATP.

As to quaternary structure, homodimer.

The catalysed reaction is XMP + L-glutamine + ATP + H2O = GMP + L-glutamate + AMP + diphosphate + 2 H(+). Its pathway is purine metabolism; GMP biosynthesis; GMP from XMP (L-Gln route): step 1/1. In terms of biological role, catalyzes the synthesis of GMP from XMP. The sequence is that of GMP synthase [glutamine-hydrolyzing] from Wolbachia sp. subsp. Brugia malayi (strain TRS).